A 527-amino-acid chain; its full sequence is Tyrosine--tRNA ligase, cytoplasmic (527 aa).

Residue tyrosine 39 coordinates L-tyrosine. A 'HIGH' region motif is present at residues 44 to 52; it reads TTGKPHVAY. Positions 166, 170, 173, and 188 each coordinate L-tyrosine. The short motif at 222–226 is the 'KMSKS' region element; the sequence is KMSSS. The Nuclear localization signal motif lies at 242 to 247; it reads KKKLKK. Residues 337-362 form a disordered region; it reads TNAAYPNPSKAKPAEKGTKNSEPETI. The span at 348–358 shows a compositional bias: basic and acidic residues; it reads KPAEKGTKNSE. Residues 363–467 enclose the tRNA-binding domain; sequence VPSRLDIRVG…AECCAGERVY (105 aa).

This sequence belongs to the class-I aminoacyl-tRNA synthetase family. As to quaternary structure, homodimer.

The protein localises to the cytoplasm. Its subcellular location is the nucleus. The catalysed reaction is tRNA(Tyr) + L-tyrosine + ATP = L-tyrosyl-tRNA(Tyr) + AMP + diphosphate + H(+). Its function is as follows. Catalyzes the attachment of tyrosine to tRNA(Tyr) in a two-step reaction: tyrosine is first activated by ATP to form Tyr-AMP and then transferred to the acceptor end of tRNA(Tyr). In Gallus gallus (Chicken), this protein is Tyrosine--tRNA ligase, cytoplasmic (YARS1).